The sequence spans 68 residues: Large ribosomal subunit protein uL29 (68 aa).

Belongs to the universal ribosomal protein uL29 family.

This is Large ribosomal subunit protein uL29 from Streptococcus sanguinis (strain SK36).